The chain runs to 236 residues: Small ribosomal subunit protein uS2c (236 aa).

This sequence belongs to the universal ribosomal protein uS2 family.

Its subcellular location is the plastid. The protein localises to the chloroplast. The protein is Small ribosomal subunit protein uS2c (rps2) of Aethionema grandiflorum (Persian stone-cress).